The primary structure comprises 261 residues: Malonyl-[acyl-carrier protein] O-methyltransferase (261 aa).

Belongs to the methyltransferase superfamily.

The enzyme catalyses malonyl-[ACP] + S-adenosyl-L-methionine = malonyl-[ACP] methyl ester + S-adenosyl-L-homocysteine. It participates in cofactor biosynthesis; biotin biosynthesis. Functionally, converts the free carboxyl group of a malonyl-thioester to its methyl ester by transfer of a methyl group from S-adenosyl-L-methionine (SAM). It allows to synthesize pimeloyl-ACP via the fatty acid synthetic pathway. The chain is Malonyl-[acyl-carrier protein] O-methyltransferase from Bacteroides thetaiotaomicron (strain ATCC 29148 / DSM 2079 / JCM 5827 / CCUG 10774 / NCTC 10582 / VPI-5482 / E50).